A 201-amino-acid polypeptide reads, in one-letter code: MYVGRFVTIGKTNGRLWAGYRVSSRSFPNRYAVKLGDDKVAIMPKDVKDLEKSPYISYNCIRVLPSVAVVTNGSHTDAIVEKIEMGYPIRDALALSLLAMDYEKDSLDTPRIAAVVSRHVAYLGIVTKDGLNVSTFPMGDNECLMVATYEKTMFSRLTVDASSAEEVARKMYDLTFEKPVCAAGAYQVDDHFELGVYNGPQ.

This sequence belongs to the archaeal IMP cyclohydrolase family.

The catalysed reaction is IMP + H2O = 5-formamido-1-(5-phospho-D-ribosyl)imidazole-4-carboxamide. The protein operates within purine metabolism; IMP biosynthesis via de novo pathway; IMP from 5-formamido-1-(5-phospho-D-ribosyl)imidazole-4-carboxamide: step 1/1. In terms of biological role, catalyzes the cyclization of 5-formylamidoimidazole-4-carboxamide ribonucleotide to IMP. In Methanocella arvoryzae (strain DSM 22066 / NBRC 105507 / MRE50), this protein is IMP cyclohydrolase.